The primary structure comprises 417 residues: Imidazolonepropionase (417 aa).

2 residues coordinate Fe(3+): His77 and His79. Residues His77 and His79 each contribute to the Zn(2+) site. 4-imidazolone-5-propanoate contacts are provided by Arg86, Tyr149, and His182. Tyr149 lines the N-formimidoyl-L-glutamate pocket. His244 is a Fe(3+) binding site. A Zn(2+)-binding site is contributed by His244. Residue Glu247 participates in 4-imidazolone-5-propanoate binding. Asp323 lines the Fe(3+) pocket. Residue Asp323 coordinates Zn(2+). Asn325 contributes to the N-formimidoyl-L-glutamate binding site.

It belongs to the metallo-dependent hydrolases superfamily. HutI family. Zn(2+) is required as a cofactor. The cofactor is Fe(3+).

Its subcellular location is the cytoplasm. The catalysed reaction is 4-imidazolone-5-propanoate + H2O = N-formimidoyl-L-glutamate. The protein operates within amino-acid degradation; L-histidine degradation into L-glutamate; N-formimidoyl-L-glutamate from L-histidine: step 3/3. In terms of biological role, catalyzes the hydrolytic cleavage of the carbon-nitrogen bond in imidazolone-5-propanoate to yield N-formimidoyl-L-glutamate. It is the third step in the universal histidine degradation pathway. This is Imidazolonepropionase from Halobacterium salinarum (strain ATCC 29341 / DSM 671 / R1).